A 437-amino-acid chain; its full sequence is Ribosomal protein uS12 methylthiotransferase RimO (437 aa).

One can recognise an MTTase N-terminal domain in the interval 4 to 114; the sequence is PRVSFVSLGC…VMSAVHEAVP (111 aa). Residues C13, C49, C78, C145, C149, and C152 each coordinate [4Fe-4S] cluster. The Radical SAM core domain maps to 131–369; it reads LTPRHYAYLK…MAKQQQISTN (239 aa). Residues 372-437 form the TRAM domain; the sequence is KKKVGKRLPV…DAYDLHGIAV (66 aa).

It belongs to the methylthiotransferase family. RimO subfamily. [4Fe-4S] cluster is required as a cofactor.

It localises to the cytoplasm. The enzyme catalyses L-aspartate(89)-[ribosomal protein uS12]-hydrogen + (sulfur carrier)-SH + AH2 + 2 S-adenosyl-L-methionine = 3-methylsulfanyl-L-aspartate(89)-[ribosomal protein uS12]-hydrogen + (sulfur carrier)-H + 5'-deoxyadenosine + L-methionine + A + S-adenosyl-L-homocysteine + 2 H(+). Catalyzes the methylthiolation of an aspartic acid residue of ribosomal protein uS12. This chain is Ribosomal protein uS12 methylthiotransferase RimO, found in Brucella anthropi (strain ATCC 49188 / DSM 6882 / CCUG 24695 / JCM 21032 / LMG 3331 / NBRC 15819 / NCTC 12168 / Alc 37) (Ochrobactrum anthropi).